We begin with the raw amino-acid sequence, 187 residues long: LSM complex subunit LSM4 (187 aa).

Positions leucine 2–isoleucine 85 constitute a Sm domain. Positions isoleucine 93–phenylalanine 187 are disordered. The segment covering asparagine 112–asparagine 167 has biased composition (low complexity). Arginine 119 carries the omega-N-methylarginine modification. Polar residues predominate over residues histidine 175–phenylalanine 187. Serine 181 bears the Phosphoserine mark.

This sequence belongs to the snRNP Sm proteins family. Component of the heptameric LSM1-LSM7 complex that forms a seven-membered ring structure with a donut shape. The LSm subunits are arranged in the order LSM1, LSM2, LSM3, LSM6, LSM5, LSM7 and LSM4. Except for LSM1, where a C-terminal helix crosses the ring structure to form additional interactions with LSM3 and LSM6, each subunit interacts only with its two neighboring subunits. The LSM1-LSM7 complex interacts with PAT1; within the complex PAT1 has direct interactions with LSM2 and LSM3. The LSM1-LSM7 complex interacts with XRN1. Component of the heptameric LSM2-LSM8 complex that forms a seven-membered ring structure with a donut shape; an RNA strand can pass through the hole in the center of the ring structure. The LSm subunits are arranged in the order LSM8, LSM2, LSM3, LSM6, LSM5, LSM7 and LSM4. Component of the spliceosome U4/U6-U5 tri-snRNP complex composed of the U4, U6 and U5 snRNAs and at least PRP3, PRP4, PRP6, PRP8, PRP18, PRP31, PRP38, SNU13, SNU23, SNU66, SNU114, SPP381, SMB1, SMD1, SMD2, SMD3, SMX2, SMX3, LSM2, LSM3, LSM4, LSM5, LSM6, LSM7, LSM8, BRR2 and DIB1. May be found in a complex comprising LSM2-LSM7 without LSM1 or LSM8; the complex associates with pre-P RNA and snoRNA SNR5.

Its subcellular location is the nucleus. The protein resides in the cytoplasm. Its function is as follows. Component of LSm protein complexes, which are involved in RNA processing and may function in a chaperone-like manner. Component of the cytoplasmic LSM1-LSM7 complex which is involved in mRNA degradation by activating the decapping step. Together with PAT1, the LSM1-LSM7 complex binds to osmotic stress-activated mRNAs to attenuate the osmotic stress response, probably by limiting ribosome access to the mRNA and consequently translation. Component of the nuclear LSM2-LSM8 complex, which is involved in spliceosome assembly. The LSM2-LSM8 complex plays a role in the biogenesis of the spliceosomal U4/U6-U5 tri-snRNP complex by accelerating PRP24-mediated annealing of U4/U6 di-snRNA. The LSM2-LSM8 complex binds U6 snRNA terminating with a non-cyclic 3' phosphate group. LSM2-LSM8 is probably also involved in degradation of nuclear pre-mRNA by targeting them for decapping. LSM2-LSM8 could be involved in processing of pre-tRNAs, pre-rRNAs and U3 snoRNA, although involvement may be indirect. In a complex that probably contains LSM2-LSM7, but not LSM1 or LSM8, associates with the precursor of the RNA component of RNase P (pre-P RNA) and may be involved in maturing pre-P RNA; the complex also associates with snoRNA SNR5. The chain is LSM complex subunit LSM4 from Saccharomyces cerevisiae (strain ATCC 204508 / S288c) (Baker's yeast).